The chain runs to 1001 residues: MEAAHSKSTEECLAYFGVSETTGLTPDQVKRHLEKYGHNELPAEEGKSLWELVIEQFEDLLVRILLLAACISFVLAWFEEGEETITAFVEPFVILLILIANAIVGVWQERNAENAIEALKEYEPEMGKVYRADRKSVQRIKARDIVPGDIVEVAVGDKVPADIRILSIKSTTLRVDQSILTGESVSVIKHTEPVPDPRAVNQDKKNMLFSGTNIAAGKALGIVATTGVSTEIGKIRDQMAATEQDKTPLQQKLDEFGEQLSKVISLICVAVWLINIGHFNDPVHGGSWIRGAIYYFKIAVALAVAAIPEGLPAVITTCLALGTRRMAKKNAIVRSLPSVETLGCTSVICSDKTGTLTTNQMSVCKMFIIDKVDGDFCSLNEFSITGSTYAPEGEVLKNDKPIRSGQFDGLVELATICALCNDSSLDFNETKGVYEKVGEATETALTTLVEKMNVFNTEVRNLSKVERANACNSVIRQLMKKEFTLEFSRDRKSMSVYCSPAKSSRAAVGNKMFVKGAPEGVIDRCNYVRVGTTRVPMTGPVKEKILSVIKEWGTGRDTLRCLALATRDTPPKREEMVLDDSSRFMEYETDLTFVGVVGMLDPPRKEVMGSIQLCRDAGIRVIMITGDNKGTAIAICRRIGIFGENEEVADRAYTGREFDDLPLAEQREACRRACCFARVEPSHKSKIVEYLQSYDEITAMTGDGVNDAPALKKAEIGIAMGSGTAVAKTASEMVLADDNFSTIVAAVEEGRAIYNNMKQFIRYLISSNVGEVVCIFLTAALGLPEALIPVQLLWVNLVTDGLPATALGFNPPDLDIMDRPPRSPKEPLISGWLFFRYMAIGGYVGAATVGAAAWWFMYAEDGPGVTYHQLTHFMQCTEDHPHFEGLDCEIFEAPEPMTMALSVLVTIEMCNALNSLSENQSLMRMPPWVNIWLLGSICLSMSLHFLILYVDPLPMIFKLKALDLTQWLMVLKISLPVIGLDEILKFIARNYLEDPEDERRK.

Residues 1–48 (MEAAHSKSTEECLAYFGVSETTGLTPDQVKRHLEKYGHNELPAEEGKS) lie on the Cytoplasmic side of the membrane. The helical transmembrane segment at 49–69 (LWELVIEQFEDLLVRILLLAA) threads the bilayer. Residues 70–89 (CISFVLAWFEEGEETITAFV) are Lumenal-facing. The helical transmembrane segment at 90 to 110 (EPFVILLILIANAIVGVWQER) threads the bilayer. At 111 to 253 (NAENAIEALK…QDKTPLQQKL (143 aa)) the chain is on the cytoplasmic side. A helical transmembrane segment spans residues 254-273 (DEFGEQLSKVISLICVAVWL). Residues 274–295 (INIGHFNDPVHGGSWIRGAIYY) lie on the Lumenal side of the membrane. Residues 296–313 (FKIAVALAVAAIPEGLPA) traverse the membrane as a helical segment. Ca(2+) contacts are provided by V304, A305, I307, and E309. Residues 314–757 (VITTCLALGT…EEGRAIYNNM (444 aa)) are Cytoplasmic-facing. The active-site 4-aspartylphosphate intermediate is the D351. Mg(2+)-binding residues include D351 and T353. Residue T353 participates in ATP binding. T441 carries the post-translational modification Phosphothreonine. ATP contacts are provided by E442, R489, K515, and R560. Residue T569 is modified to Phosphothreonine. The residue at position 581 (S581) is a Phosphoserine. Residues T625, G626, D627, R678, and K684 each coordinate ATP. D703 serves as a coordination point for Mg(2+). ATP is bound at residue N706. A helical transmembrane segment spans residues 758 to 777 (KQFIRYLISSNVGEVVCIFL). Ca(2+) contacts are provided by N768 and E771. Over 778 to 787 (TAALGLPEAL) the chain is Lumenal. The helical transmembrane segment at 788–808 (IPVQLLWVNLVTDGLPATALG) threads the bilayer. Positions 788-808 (IPVQLLWVNLVTDGLPATALG) are interaction with PLN. 3 residues coordinate Ca(2+): N796, T799, and D800. The Cytoplasmic segment spans residues 809–828 (FNPPDLDIMDRPPRSPKEPL). Residues 829 to 851 (ISGWLFFRYMAIGGYVGAATVGA) form a helical membrane-spanning segment. The Lumenal portion of the chain corresponds to 852-897 (AAWWFMYAEDGPGVTYHQLTHFMQCTEDHPHFEGLDCEIFEAPEPM). The cysteines at positions 876 and 888 are disulfide-linked. A helical transmembrane segment spans residues 898–917 (TMALSVLVTIEMCNALNSLS). Ca(2+) is bound at residue E908. Residues 918–930 (ENQSLMRMPPWVN) are Cytoplasmic-facing. Residues 931-949 (IWLLGSICLSMSLHFLILY) traverse the membrane as a helical segment. The interaction with PLN stretch occupies residues 932-943 (WLLGSICLSMSL). The Lumenal portion of the chain corresponds to 950-964 (VDPLPMIFKLKALDL). A helical transmembrane segment spans residues 965 to 985 (TQWLMVLKISLPVIGLDEILK). The Cytoplasmic segment spans residues 986–1001 (FIARNYLEDPEDERRK).

This sequence belongs to the cation transport ATPase (P-type) (TC 3.A.3) family. Type IIA subfamily. In terms of assembly, interacts with sarcolipin (SLN). Interacts with phospholamban (PLN). Interacts with myoregulin (MRLN). Interacts with DWORF. Interacts with VMP1. Mg(2+) is required as a cofactor. In terms of tissue distribution, skeletal muscle (at protein level). Skeletal muscle, fast twitch muscle (type II) fibers.

The protein resides in the endoplasmic reticulum membrane. It is found in the sarcoplasmic reticulum membrane. The catalysed reaction is Ca(2+)(in) + ATP + H2O = Ca(2+)(out) + ADP + phosphate + H(+). With respect to regulation, inhibited by sarcolipin (SLN) and myoregulin (MRLN). Has also been shown to be reversibly inhibited by phospholamban (PLN) at low calcium concentrations in vitro. Dephosphorylated PLN decreases the apparent affinity of the ATPase for calcium and this inhibition is regulated by the phosphorylation of PLN in vitro. Enhanced by DWORF; DWORF increases activity by displacing sarcolipin (SLN), phospholamban (PLN) and myoregulin (MRLN). Functionally, key regulator of striated muscle performance by acting as the major Ca(2+) ATPase responsible for the reuptake of cytosolic Ca(2+) into the sarcoplasmic reticulum. Catalyzes the hydrolysis of ATP coupled with the translocation of calcium from the cytosol to the sarcoplasmic reticulum lumen. Contributes to calcium sequestration involved in muscular excitation/contraction. The protein is Sarcoplasmic/endoplasmic reticulum calcium ATPase 1 (ATP2A1) of Oryctolagus cuniculus (Rabbit).